We begin with the raw amino-acid sequence, 328 residues long: Phosphatidate cytidylyltransferase (328 aa).

Polar residues predominate over residues serine 15–glycine 29. The tract at residues serine 15–serine 50 is disordered. 7 helical membrane-spanning segments follow: residues alanine 58 to proline 78, alanine 103 to threonine 123, tryptophan 124 to isoleucine 144, alanine 173 to tyrosine 193, phenylalanine 202 to phenylalanine 222, glycine 239 to valine 259, and proline 263 to valine 283.

Belongs to the CDS family.

The protein resides in the cell membrane. It catalyses the reaction a 1,2-diacyl-sn-glycero-3-phosphate + CTP + H(+) = a CDP-1,2-diacyl-sn-glycerol + diphosphate. Its pathway is phospholipid metabolism; CDP-diacylglycerol biosynthesis; CDP-diacylglycerol from sn-glycerol 3-phosphate: step 3/3. This chain is Phosphatidate cytidylyltransferase (cdsA), found in Mycobacterium tuberculosis (strain CDC 1551 / Oshkosh).